A 923-amino-acid polypeptide reads, in one-letter code: Calmodulin-binding transcription activator 5 (923 aa).

Residues 25–151 (IQTMLDEAYS…YRETHEVHAA (127 aa)) constitute a DNA-binding region (CG-1). The segment at 272-372 (VYQNNNSCGA…HSHSDIPEQV (101 aa)) is transcription activation. One copy of the ANK repeat lies at 611-640 (QGWTALHWAAYYGREKMVAALLSAGARPNL). IQ domains lie at 757–786 (NIIAAMKIQHAFRNFEVRRKIAAAARIQYR), 799–828 (MRKKAIRIQAAFRGFQVRRQYQKITWSVGV), and 875–904 (LERSVVKVQAMFRSKKAQQDYRRMKLAHEE). Positions 824–846 (WSVGVLEKAILRWRLKRKGFRGL) are calmodulin-binding. Residues 887 to 914 (RSKKAQQDYRRMKLAHEEAQLEYDGMQE) adopt a coiled-coil conformation.

The protein belongs to the CAMTA family. Expressed in roots, stems, leaves, pollen, top of sepals and siliques.

The protein resides in the nucleus. Transcription activator. Binds to the DNA consensus sequence 5'-[ACG]CGCG[GTC]-3'. Regulates transcriptional activity in response to calcium signals. Binds calmodulin in a calcium-dependent manner. Involved in response to cold. Contributes together with CAMTA3 to the positive regulation of the cold-induced expression of DREB1A/CBF3, DREB1B/CBF1 and DREB1C/CBF2. This Arabidopsis thaliana (Mouse-ear cress) protein is Calmodulin-binding transcription activator 5.